We begin with the raw amino-acid sequence, 407 residues long: Zinc finger protein 552 (407 aa).

One can recognise a KRAB domain in the interval 14–90; sequence VTFEDVAVKF…PMAGVSPKKA (77 aa). Residues 91 to 113 form a C2H2-type 1 zinc finger; that stretch reads HPCEMCGPILGDILHVADHQGTH. Residues 119–141 form a C2H2-type 2; degenerate zinc finger; it reads HRCEAWGNKLYDSGNFHQHQNEH. Glycyl lysine isopeptide (Lys-Gly) (interchain with G-Cter in SUMO2) cross-links involve residues Lys176 and Lys198. The C2H2-type 3; degenerate zinc finger occupies 212-234; it reads YSCGGCMKHFSTKDILSQHERLL. The C2H2-type 4; degenerate zinc finger occupies 244 to 262; that stretch reads ECGKSSSKYDSFSNHQGVH. Residues Lys251 and Lys266 each participate in a glycyl lysine isopeptide (Lys-Gly) (interchain with G-Cter in SUMO2) cross-link. 5 consecutive C2H2-type zinc fingers follow at residues 268–290, 296–318, 324–346, 352–374, and 380–402; these read YTCG…QRIH, YECE…QRVH, YECS…KRVH, YECS…RRVH, and YGCS…QRVH. A Glycyl lysine isopeptide (Lys-Gly) (interchain with G-Cter in SUMO2) cross-link involves residue Lys308.

It belongs to the krueppel C2H2-type zinc-finger protein family.

The protein resides in the nucleus. Its function is as follows. May be involved in transcriptional regulation. This chain is Zinc finger protein 552 (ZNF552), found in Homo sapiens (Human).